A 415-amino-acid polypeptide reads, in one-letter code: Gamma-glutamyl phosphate reductase (415 aa).

It belongs to the gamma-glutamyl phosphate reductase family.

It is found in the cytoplasm. It catalyses the reaction L-glutamate 5-semialdehyde + phosphate + NADP(+) = L-glutamyl 5-phosphate + NADPH + H(+). Its pathway is amino-acid biosynthesis; L-proline biosynthesis; L-glutamate 5-semialdehyde from L-glutamate: step 2/2. Functionally, catalyzes the NADPH-dependent reduction of L-glutamate 5-phosphate into L-glutamate 5-semialdehyde and phosphate. The product spontaneously undergoes cyclization to form 1-pyrroline-5-carboxylate. This chain is Gamma-glutamyl phosphate reductase, found in Listeria innocua serovar 6a (strain ATCC BAA-680 / CLIP 11262).